The following is a 249-amino-acid chain: Suppressor of silencing P0 (249 aa).

The 5-residue stretch at 63–67 (LPFHL) folds into the F-box-like domain.

It belongs to the polerovirus P0 protein family. As to quaternary structure, interacts (via F-box-like domain) with host AGO1; this interaction targets AGO1 for degradation, and thereby suppresses the silencing function of the latter. Interacts (via F-box-like domain) with host ASK1 and ASK2 (SKP proteins); these interactions are essential for viral pathogenicity. Part of a SCF P0 complex composed of P0 and the host proteins SKP and CUL1.

Suppressor of RNA-mediated gene silencing, also known as post-transcriptional gene silencing (PTGS), a mechanism of plant viral defense that limits the accumulation of viral RNAs. The P0 protein suppresses local PTGS using its F-box-like domain to mediate destabilization and degradation of the AGO1 protein. The sequence is that of Suppressor of silencing P0 from Turnip yellows virus (isolate FL-1) (TuYV).